We begin with the raw amino-acid sequence, 968 residues long: Translation initiation factor IF-2 (968 aa).

Positions 51–76 are enriched in low complexity; it reads PAAGASKSEAPAAAPKAPASPAATRP. The disordered stretch occupies residues 51–369; the sequence is PAAGASKSEA…GVSVPRGDGN (319 aa). The segment covering 77–87 has biased composition (pro residues); sequence APAPGPAAPKA. A compositionally biased stretch (low complexity) spans 93-102; that stretch reads EAPAAASAPS. Residues 103 to 112 show a composition bias toward pro residues; the sequence is APAPAAPAPA. 3 stretches are compositionally biased toward low complexity: residues 113–122, 128–170, and 239–254; these read APAAAASAPS, APST…GNNP, and GARP…PGAR. Residues 281–336 are compositionally biased toward gly residues; it reads GRPGGGGRGPGRPGGAPGTGGAPGAGGGAPAGGGFGKGGRGRGGTQGAFGKGGAGR. Basic residues predominate over residues 337 to 346; sequence GKQRKSKRAK. Residues 461 to 632 form the tr-type G domain; the sequence is ARPPVVTVMG…AVLLTADAAL (172 aa). The interval 470-477 is G1; the sequence is GHVDHGKT. Residue 470–477 coordinates GTP; the sequence is GHVDHGKT. Residues 495–499 form a G2 region; it reads GITQH. Residues 520 to 523 are G3; the sequence is DTPG. GTP contacts are provided by residues 520–524 and 574–577; these read DTPGH and NKID. The interval 574-577 is G4; sequence NKID. The tract at residues 610–612 is G5; it reads SAR.

The protein belongs to the TRAFAC class translation factor GTPase superfamily. Classic translation factor GTPase family. IF-2 subfamily.

It is found in the cytoplasm. One of the essential components for the initiation of protein synthesis. Protects formylmethionyl-tRNA from spontaneous hydrolysis and promotes its binding to the 30S ribosomal subunits. Also involved in the hydrolysis of GTP during the formation of the 70S ribosomal complex. This Arthrobacter sp. (strain FB24) protein is Translation initiation factor IF-2.